The chain runs to 255 residues: Alpha-acetolactate decarboxylase (255 aa).

Belongs to the alpha-acetolactate decarboxylase family.

The catalysed reaction is (2S)-2-acetolactate + H(+) = (R)-acetoin + CO2. It functions in the pathway polyol metabolism; (R,R)-butane-2,3-diol biosynthesis; (R,R)-butane-2,3-diol from pyruvate: step 2/3. In terms of biological role, converts acetolactate into acetoin, which can be excreted by the cells. This may be a mechanism for controlling the internal pH of cells in the stationary stage. This is Alpha-acetolactate decarboxylase (alsD) from Bacillus subtilis (strain 168).